The following is a 754-amino-acid chain: 5-methyltetrahydropteroyltriglutamate--homocysteine methyltransferase (754 aa).

Residues 17-20 and lysine 117 each bind 5-methyltetrahydropteroyltri-L-glutamate; that span reads RELK. L-homocysteine-binding positions include 431–433 and glutamate 484; that span reads IGS. Residues 431–433 and glutamate 484 contribute to the L-methionine site; that span reads IGS. 5-methyltetrahydropteroyltri-L-glutamate-binding positions include 515–516 and tryptophan 561; that span reads RC. Residue aspartate 599 coordinates L-homocysteine. Aspartate 599 is a binding site for L-methionine. Glutamate 605 provides a ligand contact to 5-methyltetrahydropteroyltri-L-glutamate. Histidine 641, cysteine 643, and glutamate 665 together coordinate Zn(2+). Histidine 694 functions as the Proton donor in the catalytic mechanism. Cysteine 726 contacts Zn(2+).

This sequence belongs to the vitamin-B12 independent methionine synthase family. Zn(2+) serves as cofactor.

The catalysed reaction is 5-methyltetrahydropteroyltri-L-glutamate + L-homocysteine = tetrahydropteroyltri-L-glutamate + L-methionine. It participates in amino-acid biosynthesis; L-methionine biosynthesis via de novo pathway; L-methionine from L-homocysteine (MetE route): step 1/1. Catalyzes the transfer of a methyl group from 5-methyltetrahydrofolate to homocysteine resulting in methionine formation. This is 5-methyltetrahydropteroyltriglutamate--homocysteine methyltransferase from Salmonella choleraesuis (strain SC-B67).